The primary structure comprises 408 residues: Adenylosuccinate synthetase (408 aa).

GTP is bound by residues 12 to 18 and 40 to 42; these read GDEGKGK and GHT. Catalysis depends on Asp13, which acts as the Proton acceptor. Mg(2+) contacts are provided by Asp13 and Gly40. IMP is bound by residues 13 to 16, 38 to 41, Thr121, Arg135, Gln213, Thr228, and Arg292; these read DEGK and NAGH. Catalysis depends on His41, which acts as the Proton donor. Position 288-294 (288-294) interacts with substrate; sequence TTTGRPR. Residues Arg294, 320 to 322, and 393 to 395 contribute to the GTP site; these read KLD and STS.

Belongs to the adenylosuccinate synthetase family. As to quaternary structure, homodimer. It depends on Mg(2+) as a cofactor.

Its subcellular location is the cytoplasm. The catalysed reaction is IMP + L-aspartate + GTP = N(6)-(1,2-dicarboxyethyl)-AMP + GDP + phosphate + 2 H(+). It functions in the pathway purine metabolism; AMP biosynthesis via de novo pathway; AMP from IMP: step 1/2. In terms of biological role, plays an important role in the de novo pathway of purine nucleotide biosynthesis. Catalyzes the first committed step in the biosynthesis of AMP from IMP. In Thermus thermophilus (strain ATCC BAA-163 / DSM 7039 / HB27), this protein is Adenylosuccinate synthetase.